The following is a 310-amino-acid chain: L-lactate dehydrogenase (310 aa).

NAD(+) is bound by residues V11, D32, Y62, and 76-77 (GV). Substrate-binding positions include Q79, R85, and 117 to 120 (NPVD). NAD(+) contacts are provided by residues 115 to 117 (ATN) and S140. 145–148 (DTAR) serves as a coordination point for substrate. Beta-D-fructose 1,6-bisphosphate is bound by residues R150 and H165. Residue H172 is the Proton acceptor of the active site. Y218 is subject to Phosphotyrosine. T227 is a binding site for substrate.

The protein belongs to the LDH/MDH superfamily. LDH family. As to quaternary structure, homotetramer.

The protein localises to the cytoplasm. The enzyme catalyses (S)-lactate + NAD(+) = pyruvate + NADH + H(+). The protein operates within fermentation; pyruvate fermentation to lactate; (S)-lactate from pyruvate: step 1/1. Activated by citrate at pH 5. Allosterically activated by fructose 1,6-bisphosphate (FBP) at pH from 5.8 to 7.2. In terms of biological role, catalyzes the conversion of lactate to pyruvate. The protein is L-lactate dehydrogenase of Thermus aquaticus.